We begin with the raw amino-acid sequence, 602 residues long: MPVERDRIRNFCIIAHIDHGKSTLADRLLEYTGALVGRRMQEQVLDQMDLERERGITIKLQAVRLAYRARDGRDYQLNLIDTPGHVDFSYEVSRSLAACEGALLVVDASQGIEAQTLANVNLALDHNLTIIPIINKIDLASAEPDRVRRELEDVIGLDGADAVLASAKRGDGVEEILERIVRDVPPPGGDPGAPLRALIFDSHYDPYRGVVTYLRLMDGRLFPGGPVRMMATGREFEVSELGVFTPAPVTVNELRAGEVGFMAAGIKNVKDCRVGDTVTDARRPASSPLPGYRKAKPMVYCGLFPVDGAEFEKVRDALDRLSLNDASLVYEPETSTALGFGFRCGFLGLLHMEIIQERLEREYGLDLITTAPSVVYRVTRTNGAVLDIRNPSEMPPAGEIEKMEEPFVLTSLLLPQDYIGPVMELCQDRRGVFRNMEYISTHRVLITYEMPLAEIIYDFFDRLKSATRGYASMDYDLLGYRESKLVRVDILVAGERLDALSIIVHRDRAYHRSKIIVERLRDLIPRQLFEIVIQAAIGQRVIARESIRALRKAVLEKCYGGDVTRKRKLLEKQKEGKKRMKQVGHVQIPQEAFMSVLSIGQK.

A tr-type G domain is found at Asp6–Gly188. GTP is bound by residues Asp18–Thr23 and Asn135–Asp138.

Belongs to the TRAFAC class translation factor GTPase superfamily. Classic translation factor GTPase family. LepA subfamily.

The protein resides in the cell membrane. It catalyses the reaction GTP + H2O = GDP + phosphate + H(+). Required for accurate and efficient protein synthesis under certain stress conditions. May act as a fidelity factor of the translation reaction, by catalyzing a one-codon backward translocation of tRNAs on improperly translocated ribosomes. Back-translocation proceeds from a post-translocation (POST) complex to a pre-translocation (PRE) complex, thus giving elongation factor G a second chance to translocate the tRNAs correctly. Binds to ribosomes in a GTP-dependent manner. This is Elongation factor 4 from Desulforudis audaxviator (strain MP104C).